Here is a 130-residue protein sequence, read N- to C-terminus: Putative F-box protein At1g77880 (130 aa).

One can recognise an F-box domain in the interval 18-64 (KVSIPYLPDDLLLNCLARISRLYYPTLSLVSKRFRSLLASTELYETR).

This Arabidopsis thaliana (Mouse-ear cress) protein is Putative F-box protein At1g77880.